A 429-amino-acid polypeptide reads, in one-letter code: SET domain-containing protein 8 (429 aa).

The SET domain occupies 17 to 232; the sequence is KQITIKKIRK…ENEEVTINYG (216 aa).

The protein belongs to the class V-like SAM-binding methyltransferase superfamily.

It localises to the cytoplasm. It is found in the nucleus. This Schizosaccharomyces pombe (strain 972 / ATCC 24843) (Fission yeast) protein is SET domain-containing protein 8 (set8).